A 219-amino-acid polypeptide reads, in one-letter code: Ribose-5-phosphate isomerase A (219 aa).

Residues 28 to 31 (TGST), 81 to 84 (DGAD), and 94 to 97 (KGGG) each bind substrate. The active-site Proton acceptor is the Glu-103. Lys-121 contributes to the substrate binding site.

It belongs to the ribose 5-phosphate isomerase family. As to quaternary structure, homodimer.

The catalysed reaction is aldehydo-D-ribose 5-phosphate = D-ribulose 5-phosphate. It functions in the pathway carbohydrate degradation; pentose phosphate pathway; D-ribose 5-phosphate from D-ribulose 5-phosphate (non-oxidative stage): step 1/1. Catalyzes the reversible conversion of ribose-5-phosphate to ribulose 5-phosphate. The sequence is that of Ribose-5-phosphate isomerase A from Salmonella arizonae (strain ATCC BAA-731 / CDC346-86 / RSK2980).